The following is a 156-amino-acid chain: Small ribosomal subunit protein uS7 (156 aa).

It belongs to the universal ribosomal protein uS7 family. As to quaternary structure, part of the 30S ribosomal subunit. Contacts proteins S9 and S11.

Functionally, one of the primary rRNA binding proteins, it binds directly to 16S rRNA where it nucleates assembly of the head domain of the 30S subunit. Is located at the subunit interface close to the decoding center, probably blocks exit of the E-site tRNA. The polypeptide is Small ribosomal subunit protein uS7 (Methylorubrum extorquens (strain CM4 / NCIMB 13688) (Methylobacterium extorquens)).